Here is a 410-residue protein sequence, read N- to C-terminus: Replication-associated protein G2P (410 aa).

An N-formylmethionine modification is found at methionine 1.

The protein belongs to the inovirus G2P protein family.

It carries out the reaction ATP + (deoxyribonucleotide)n-3'-hydroxyl + 5'-phospho-(deoxyribonucleotide)m = (deoxyribonucleotide)n+m + AMP + diphosphate.. Isoform G2P plays an essential role in viral DNA replication. Binds the origin of replication and cleaves the dsDNA replicative form I (RFI) and becomes covalently bound to it via phosphotyrosine bond, generating the dsDNA replicative form II (RFII). In turn, viral DNA replication initiates at the 3'-OH of the cleavage site. After one round of rolling circle synthesis, protein G2P is linked to the newly synthesized ssDNA and joins the ends of the displaced strand to generate a circular single-stranded molecule ready to be packed into a virion. Its function is as follows. Isoform G10P protein binds to double-stranded DNA and prevents hydrolysis by nucleases. Additionally, G10P is an inhibitor of DNA replication and may have a role in the transition from semiconservative replicative form DNA replication to single-stranded DNA synthesis in the life cycle. The sequence is that of Replication-associated protein G2P (II) from Enterobacteria phage fd (Bacteriophage fd).